We begin with the raw amino-acid sequence, 373 residues long: Queuine tRNA-ribosyltransferase (373 aa).

The active-site Proton acceptor is aspartate 90. Substrate-binding positions include aspartate 90–phenylalanine 94, aspartate 144, glutamine 193, and glycine 220. An RNA binding region spans residues glycine 251–aspartate 257. The active-site Nucleophile is the aspartate 270. The interval threonine 275–arginine 279 is RNA binding; important for wobble base 34 recognition. Residues cysteine 308, cysteine 310, cysteine 313, and histidine 339 each coordinate Zn(2+).

This sequence belongs to the queuine tRNA-ribosyltransferase family. As to quaternary structure, homodimer. Within each dimer, one monomer is responsible for RNA recognition and catalysis, while the other monomer binds to the replacement base PreQ1. Zn(2+) serves as cofactor.

It carries out the reaction 7-aminomethyl-7-carbaguanine + guanosine(34) in tRNA = 7-aminomethyl-7-carbaguanosine(34) in tRNA + guanine. It participates in tRNA modification; tRNA-queuosine biosynthesis. Its function is as follows. Catalyzes the base-exchange of a guanine (G) residue with the queuine precursor 7-aminomethyl-7-deazaguanine (PreQ1) at position 34 (anticodon wobble position) in tRNAs with GU(N) anticodons (tRNA-Asp, -Asn, -His and -Tyr). Catalysis occurs through a double-displacement mechanism. The nucleophile active site attacks the C1' of nucleotide 34 to detach the guanine base from the RNA, forming a covalent enzyme-RNA intermediate. The proton acceptor active site deprotonates the incoming PreQ1, allowing a nucleophilic attack on the C1' of the ribose to form the product. After dissociation, two additional enzymatic reactions on the tRNA convert PreQ1 to queuine (Q), resulting in the hypermodified nucleoside queuosine (7-(((4,5-cis-dihydroxy-2-cyclopenten-1-yl)amino)methyl)-7-deazaguanosine). This Campylobacter jejuni (strain RM1221) protein is Queuine tRNA-ribosyltransferase.